A 522-amino-acid polypeptide reads, in one-letter code: Colicin-E1 (522 aa).

2 disordered regions span residues 26–52 (NGTP…AAIH) and 136–165 (EEKA…REKA). Residues 30–42 (DGSGSGGGGGKGG) show a composition bias toward gly residues. The next 2 helical transmembrane spans lie at 471-487 (AADA…FSLL) and 494-510 (IWGI…YIDK).

Belongs to the channel forming colicin family.

Its subcellular location is the cell membrane. Functionally, this colicin is a channel-forming colicin. This class of transmembrane toxins depolarize the cytoplasmic membrane, leading to dissipation of cellular energy. Its function is as follows. Colicins are polypeptide toxins produced by and active against E.coli and closely related bacteria. The chain is Colicin-E1 (cea) from Escherichia coli.